Consider the following 551-residue polypeptide: E3 SUMO-protein ligase CBX4 (551 aa).

In terms of domain architecture, Chromo spans F11–Y69. Glycyl lysine isopeptide (Lys-Gly) (interchain with G-Cter in SUMO2) cross-links involve residues K77, K106, K114, and K125. The disordered stretch occupies residues K125–Y152. Position 149 is an N6-acetyllysine; alternate (K149). Residue K149 forms a Glycyl lysine isopeptide (Lys-Gly) (interchain with G-Cter in SUMO2); alternate linkage. Glycyl lysine isopeptide (Lys-Gly) (interchain with G-Cter in SUMO2) cross-links involve residues K157, K167, and K178. The disordered stretch occupies residues Q172–H193. S182 bears the Phosphoserine mark. Glycyl lysine isopeptide (Lys-Gly) (interchain with G-Cter in SUMO2) cross-links involve residues K191, K205, K212, K223, K249, K268, K278, and K280. Positions G216–N244 are disordered. Composition is skewed to basic and acidic residues over residues S281–S291, A298–F310, and S317–E332. 2 disordered regions span residues S281–L399 and T430–A451. Glycyl lysine isopeptide (Lys-Gly) (interchain with G-Cter in SUMO2) cross-links involve residues K321, K353, and K366. The segment covering P381 to T396 has biased composition (basic residues). S463 carries the post-translational modification Phosphoserine. K490 participates in a covalent cross-link: Glycyl lysine isopeptide (Lys-Gly) (interchain with G-Cter in SUMO2); alternate. Residue K490 forms a Glycyl lysine isopeptide (Lys-Gly) (interchain with G-Cter in SUMO); alternate linkage.

In terms of assembly, interacts with SUV39H1 and HIPK2. Interacts with CSNK2B. Component of a PRC1-like complex. The composition of the PRC1 complex differs between the PRC1 complex in pluripotent embryonic stem cells containing RNF2, CBX7 and PCGF2, and the PRC1 complex in differentiating cells containing RNF2, CBX2, CBX4 and BMI1. Interacts with RNF2. Interacts (via chromodomain) with histone H3K9Me3 and single-stranded RNA (ssRNA). Interacts with CHTOP. May interact with H3C15 and H3C1. Interacts with PRDM1. Ubiquitinated. Ubiquitination regulates the function of the Polycomb group (PcG) multiprotein PRC1-like complex. Deubiquitinated by USP26. Expressed in embryoid bodies.

It localises to the nucleus. The protein localises to the nucleus speckle. It participates in protein modification; protein sumoylation. Its function is as follows. E3 SUMO-protein ligase that catalyzes sumoylation of target proteins by promoting the transfer of SUMO from the E2 enzyme to the substrate. Involved in the sumoylation of HNRNPK, a p53/TP53 transcriptional coactivator, hence indirectly regulates p53/TP53 transcriptional activation resulting in p21/CDKN1A expression. Functionally, component of a Polycomb group (PcG) multiprotein PRC1-like complex, a complex class required to maintain the transcriptionally repressive state of many genes, including Hox genes, throughout development. PcG PRC1 complex acts via chromatin remodeling and modification of histones; it mediates monoubiquitination of histone H2A 'Lys-119', rendering chromatin heritably changed in its expressibility. Binds to histone H3 trimethylated at 'Lys-9' (H3K9me3). Plays a role in the lineage differentiation of the germ layers in embryonic development. The sequence is that of E3 SUMO-protein ligase CBX4 (Cbx4) from Mus musculus (Mouse).